The following is a 491-amino-acid chain: Glutamate--tRNA ligase (491 aa).

Positions 14-24 (PSPTGSPHVGL) match the 'HIGH' region motif. Zn(2+) contacts are provided by Cys-111, Cys-113, Cys-136, and Asp-138. Positions 257–261 (KLSKR) match the 'KMSKS' region motif. Lys-260 provides a ligand contact to ATP.

It belongs to the class-I aminoacyl-tRNA synthetase family. Glutamate--tRNA ligase type 1 subfamily. Monomer. Requires Zn(2+) as cofactor.

It localises to the cytoplasm. It catalyses the reaction tRNA(Glu) + L-glutamate + ATP = L-glutamyl-tRNA(Glu) + AMP + diphosphate. Catalyzes the attachment of glutamate to tRNA(Glu) in a two-step reaction: glutamate is first activated by ATP to form Glu-AMP and then transferred to the acceptor end of tRNA(Glu). The chain is Glutamate--tRNA ligase from Nocardioides sp. (strain ATCC BAA-499 / JS614).